The primary structure comprises 284 residues: 2-dehydro-3-deoxyphosphooctonate aldolase (284 aa).

It belongs to the KdsA family.

The protein resides in the cytoplasm. The enzyme catalyses D-arabinose 5-phosphate + phosphoenolpyruvate + H2O = 3-deoxy-alpha-D-manno-2-octulosonate-8-phosphate + phosphate. Its pathway is carbohydrate biosynthesis; 3-deoxy-D-manno-octulosonate biosynthesis; 3-deoxy-D-manno-octulosonate from D-ribulose 5-phosphate: step 2/3. It functions in the pathway bacterial outer membrane biogenesis; lipopolysaccharide biosynthesis. The polypeptide is 2-dehydro-3-deoxyphosphooctonate aldolase (Vibrio atlanticus (strain LGP32) (Vibrio splendidus (strain Mel32))).